The primary structure comprises 60 residues: Large ribosomal subunit protein uL30 (60 aa).

It belongs to the universal ribosomal protein uL30 family. As to quaternary structure, part of the 50S ribosomal subunit.

This is Large ribosomal subunit protein uL30 from Streptococcus gordonii (strain Challis / ATCC 35105 / BCRC 15272 / CH1 / DL1 / V288).